The chain runs to 430 residues: Histidine--tRNA ligase (430 aa).

It belongs to the class-II aminoacyl-tRNA synthetase family. Homodimer.

It localises to the cytoplasm. It catalyses the reaction tRNA(His) + L-histidine + ATP = L-histidyl-tRNA(His) + AMP + diphosphate + H(+). The protein is Histidine--tRNA ligase of Lactococcus lactis subsp. cremoris (strain SK11).